The primary structure comprises 430 residues: Glutamate-1-semialdehyde 2,1-aminomutase (430 aa).

Lys-265 is subject to N6-(pyridoxal phosphate)lysine.

Belongs to the class-III pyridoxal-phosphate-dependent aminotransferase family. HemL subfamily. As to quaternary structure, homodimer. It depends on pyridoxal 5'-phosphate as a cofactor.

Its subcellular location is the cytoplasm. The catalysed reaction is (S)-4-amino-5-oxopentanoate = 5-aminolevulinate. It participates in porphyrin-containing compound metabolism; protoporphyrin-IX biosynthesis; 5-aminolevulinate from L-glutamyl-tRNA(Glu): step 2/2. This is Glutamate-1-semialdehyde 2,1-aminomutase from Shewanella baltica (strain OS223).